A 289-amino-acid chain; its full sequence is uncharacterized protein (289 aa).

The segment at 268–289 (SDDGYETQWSDGPYSIPSGLSD) is disordered.

This is an uncharacterized protein from Zea mays (Maize).